The following is a 151-amino-acid chain: Transcriptional regulator MraZ (151 aa).

SpoVT-AbrB domains lie at 5–51 (AHEL…PVAE) and 81–124 (AEIL…GREQ).

It belongs to the MraZ family. As to quaternary structure, forms oligomers.

The protein localises to the cytoplasm. The protein resides in the nucleoid. The chain is Transcriptional regulator MraZ from Neisseria meningitidis serogroup A / serotype 4A (strain DSM 15465 / Z2491).